The chain runs to 247 residues: Phycobilisome rod-core linker polypeptide CpcG2 (247 aa).

Residues 11–189 form the PBS-linker domain; sequence SSQNQRVPGY…YWRDKLENER (179 aa).

Belongs to the phycobilisome linker protein family. The phycobilisome is a hemidiscoidal structure that is composed of two distinct substructures: a core complex and a number of rods radiating from the core.

Its subcellular location is the cellular thylakoid membrane. Its function is as follows. Rod-core linker protein required for attachment of phycocyanin to allophycocyanin in cores of phycobilisomes. Linker polypeptides determine the state of aggregation and the location of the disk-shaped phycobiliprotein units within the phycobilisome and modulate their spectroscopic properties in order to mediate a directed and optimal energy transfer. The sequence is that of Phycobilisome rod-core linker polypeptide CpcG2 (cpcG2) from Mastigocladus laminosus (Fischerella sp.).